A 288-amino-acid chain; its full sequence is 3-methyl-2-oxobutanoate hydroxymethyltransferase (288 aa).

Residues Asp-48 and Asp-87 each contribute to the Mg(2+) site. 3-methyl-2-oxobutanoate-binding positions include 48-49, Asp-87, and Lys-116; that span reads DS. Residue Glu-118 participates in Mg(2+) binding. Glu-185 serves as the catalytic Proton acceptor.

It belongs to the PanB family. Homodecamer; pentamer of dimers. Mg(2+) is required as a cofactor.

The protein resides in the cytoplasm. It catalyses the reaction 3-methyl-2-oxobutanoate + (6R)-5,10-methylene-5,6,7,8-tetrahydrofolate + H2O = 2-dehydropantoate + (6S)-5,6,7,8-tetrahydrofolate. The protein operates within cofactor biosynthesis; coenzyme A biosynthesis. Catalyzes the reversible reaction in which hydroxymethyl group from 5,10-methylenetetrahydrofolate is transferred onto alpha-ketoisovalerate to form ketopantoate. The sequence is that of 3-methyl-2-oxobutanoate hydroxymethyltransferase from Hyperthermus butylicus (strain DSM 5456 / JCM 9403 / PLM1-5).